Here is a 400-residue protein sequence, read N- to C-terminus: Ubiquitin-like modifier-activating enzyme 5 (400 aa).

ATP contacts are provided by G76, D97, K120, N143, and N177. The Zn(2+) site is built by C219 and C222. The active-site Glycyl thioester intermediate is the C243. The Zn(2+) site is built by C296 and C301.

This sequence belongs to the ubiquitin-activating E1 family. UBA5 subfamily.

E1-like enzyme which activates UFM1. In Drosophila virilis (Fruit fly), this protein is Ubiquitin-like modifier-activating enzyme 5.